Here is a 440-residue protein sequence, read N- to C-terminus: tRNA-2-methylthio-N(6)-dimethylallyladenosine synthase (440 aa).

The region spanning 5 to 121 (KLLYLETFGC…LPELVRAAEK (117 aa)) is the MTTase N-terminal domain. Residues Cys-14, Cys-50, Cys-84, Cys-159, Cys-163, and Cys-166 each coordinate [4Fe-4S] cluster. The Radical SAM core domain maps to 145–375 (RTDGVSRFVT…LDLQRRITLE (231 aa)). In terms of domain architecture, TRAM spans 378-440 (KSFVGTVQQV…QNSLQGELCR (63 aa)).

This sequence belongs to the methylthiotransferase family. MiaB subfamily. Monomer. Requires [4Fe-4S] cluster as cofactor.

The protein localises to the cytoplasm. The enzyme catalyses N(6)-dimethylallyladenosine(37) in tRNA + (sulfur carrier)-SH + AH2 + 2 S-adenosyl-L-methionine = 2-methylsulfanyl-N(6)-dimethylallyladenosine(37) in tRNA + (sulfur carrier)-H + 5'-deoxyadenosine + L-methionine + A + S-adenosyl-L-homocysteine + 2 H(+). Its function is as follows. Catalyzes the methylthiolation of N6-(dimethylallyl)adenosine (i(6)A), leading to the formation of 2-methylthio-N6-(dimethylallyl)adenosine (ms(2)i(6)A) at position 37 in tRNAs that read codons beginning with uridine. The chain is tRNA-2-methylthio-N(6)-dimethylallyladenosine synthase from Geotalea uraniireducens (strain Rf4) (Geobacter uraniireducens).